We begin with the raw amino-acid sequence, 578 residues long: Phosphatase DCR2 (578 aa).

116–123 (GRRWFGKS) contacts ATP.

It localises to the cytoplasm. Required for cell cycle progression. Has a role in the completion of START. This Saccharomyces cerevisiae (strain ATCC 204508 / S288c) (Baker's yeast) protein is Phosphatase DCR2 (DCR2).